Reading from the N-terminus, the 419-residue chain is MSENSSTDMYLFKKSLKELKGKRGKGTELISVYVPAGRRLSDISQHLRQELSQSSNIKSKTTMKNVQSAIEVILQRLKLLKEPLEKGVIIFAGMIPRGGPGTEKMEVYVLEPPEPVKTFIYRCDSEFYTESLEDFIQDTEVYGVILVDRNEATIGTVKGKTITVLKKLTSGVPGKFKAGGQSARRLERLIDDAAHQFMVRIGEYSTESFMPILEEKKLRGLLIGGPGNTKNEFAEKDFLHHELKKKIIDTFDLCYTEEFGIRELLEKASDLLRDLDLMKEKNLIQKFFKELIKDDGGLSAYGESQVMRYLEMGAIDTLIVTEDIELTRVTIKCNNCNFKQEINVKTRDLYKFEDEVKTKICKQCSGSMYIEEEKDIIEYLSELCNIHNSDIVVVSTDTEEGSQISKAFKGMAAILRYKI.

Belongs to the eukaryotic release factor 1 family. As to quaternary structure, heterodimer of two subunits, one of which binds GTP.

It is found in the cytoplasm. Its function is as follows. Directs the termination of nascent peptide synthesis (translation) in response to the termination codons UAA, UAG and UGA. In Methanococcus vannielii (strain ATCC 35089 / DSM 1224 / JCM 13029 / OCM 148 / SB), this protein is Peptide chain release factor subunit 1.